Reading from the N-terminus, the 250-residue chain is NAD-dependent protein deacylase (250 aa).

Residues 1 to 250 (MIVEVARVLA…VVHEVRRLLQ (250 aa)) enclose the Deacetylase sirtuin-type domain. 20 to 39 (GAGISAESGVPTFRGKDGLW) is an NAD(+) binding site. 2 residues coordinate substrate: tyrosine 64 and arginine 67. An NAD(+)-binding site is contributed by 98-101 (QNVD). Residue histidine 116 is the Proton acceptor of the active site. Zn(2+)-binding residues include cysteine 124, cysteine 127, cysteine 150, and cysteine 153. NAD(+) contacts are provided by residues 190 to 192 (GTS), 216 to 218 (NVE), and alanine 234.

Belongs to the sirtuin family. Class III subfamily. The cofactor is Zn(2+).

It is found in the cytoplasm. The enzyme catalyses N(6)-acetyl-L-lysyl-[protein] + NAD(+) + H2O = 2''-O-acetyl-ADP-D-ribose + nicotinamide + L-lysyl-[protein]. The catalysed reaction is N(6)-succinyl-L-lysyl-[protein] + NAD(+) + H2O = 2''-O-succinyl-ADP-D-ribose + nicotinamide + L-lysyl-[protein]. Its function is as follows. NAD-dependent lysine deacetylase and desuccinylase that specifically removes acetyl and succinyl groups on target proteins. Modulates the activities of several proteins which are inactive in their acylated form. Deacetylates the N-terminal lysine residue of Alba, the major archaeal chromatin protein and that, in turn, increases Alba's DNA binding affinity, thereby repressing transcription. In Pyrococcus abyssi (strain GE5 / Orsay), this protein is NAD-dependent protein deacylase.